Here is a 375-residue protein sequence, read N- to C-terminus: Chaperone protein DnaJ (375 aa).

Residues 4-68 (DYYETLGVDR…ETRARYDQFG (65 aa)) form the J domain. The segment at 134-216 (GGEKEIRIPH…CGGAGRKQET (83 aa)) adopts a CR-type zinc-finger fold. Residues cysteine 147, cysteine 150, cysteine 164, cysteine 167, cysteine 190, cysteine 193, cysteine 204, and cysteine 207 each contribute to the Zn(2+) site. CXXCXGXG motif repeat units follow at residues 147–154 (CQVCNGSG), 164–171 (CSTCNGAG), 190–197 (CPDCNGAG), and 204–211 (CDACGGAG).

This sequence belongs to the DnaJ family. In terms of assembly, homodimer. Zn(2+) is required as a cofactor.

Its subcellular location is the cytoplasm. In terms of biological role, participates actively in the response to hyperosmotic and heat shock by preventing the aggregation of stress-denatured proteins and by disaggregating proteins, also in an autonomous, DnaK-independent fashion. Unfolded proteins bind initially to DnaJ; upon interaction with the DnaJ-bound protein, DnaK hydrolyzes its bound ATP, resulting in the formation of a stable complex. GrpE releases ADP from DnaK; ATP binding to DnaK triggers the release of the substrate protein, thus completing the reaction cycle. Several rounds of ATP-dependent interactions between DnaJ, DnaK and GrpE are required for fully efficient folding. Also involved, together with DnaK and GrpE, in the DNA replication of plasmids through activation of initiation proteins. The protein is Chaperone protein DnaJ of Rippkaea orientalis (strain PCC 8801 / RF-1) (Cyanothece sp. (strain PCC 8801)).